Reading from the N-terminus, the 640-residue chain is MKNKNSKQNTHSTIGEQDIHYFHEGKHIYAYEFMGAHKACEGGIEGIRFTTWAPNAKSICVIGDFNYWQVEDKNYMEPITDAGLWSVFIPNAKNGDKYKFVVTNKDTNHYVYKSDPYAFFSELRPNTASIITTETQYTWSDDKWLEKRAKTNYYDNPMNVYELHLASWKTKDGKFMTYDELSETLPQYIKEMGYTHVEFMPLHEHPLDASWGYQPTGFYSVNSRHGDIIGLKRLVDKLHNNDIGVILDWVPGHFCKDQHGLIYFDGTPCYEYQEHTKAINKGWGTHNFDLGRNEVKCFLISNAMYWINEFHIDGLRVDAVSNILYLNYDREDGQWIPNIYGGHENLEGIAFLKELNGVLKHTCKGVVTIAEESSSWPDISTPVEKGGLGFDFKWNMGWMNDTLRYISLDPVYRKYHHNLITFSMVYHYSEKFILSISHDEVVHGKKSLINKMWGDLWNKYAGLRLYMSYMIGHPGKKLIFMGSEFGQFVEWREYEQLQWQVVDQYESHKQTLHFFKKLNDFYHNETALWQCDYDHHGFRWIDADNSQQSILSFIRSSKDNKQKLIFICNFTPVTYYDYHLGVPDAGSYKEVFNSDNLEFGGSGQVMATEIFSSPQSSHGFEQRITIKIPPMATLVLKLIK.

Asp318 serves as the catalytic Nucleophile. The Proton donor role is filled by Glu371.

It belongs to the glycosyl hydrolase 13 family. GlgB subfamily. In terms of assembly, monomer.

The enzyme catalyses Transfers a segment of a (1-&gt;4)-alpha-D-glucan chain to a primary hydroxy group in a similar glucan chain.. It functions in the pathway glycan biosynthesis; glycogen biosynthesis. Its function is as follows. Catalyzes the formation of the alpha-1,6-glucosidic linkages in glycogen by scission of a 1,4-alpha-linked oligosaccharide from growing alpha-1,4-glucan chains and the subsequent attachment of the oligosaccharide to the alpha-1,6 position. The chain is 1,4-alpha-glucan branching enzyme GlgB from Francisella tularensis subsp. novicida (strain U112).